A 292-amino-acid polypeptide reads, in one-letter code: Forkhead box protein R1 (292 aa).

Disordered stretches follow at residues 31-50 (PPKL…PDYE) and 65-166 (PGKL…ASSQ). Composition is skewed to basic and acidic residues over residues 35-47 (PLEK…KDGP) and 70-79 (VSGRRKREDL). Residues 80–89 (TSTLPSSQPP) are compositionally biased toward polar residues. Acidic residues predominate over residues 129 to 140 (LTEEEEAEDQED). A compositionally biased stretch (basic residues) spans 149–161 (PHKRAPLQSRRLR). Positions 173–272 (RPPLNYFHLI…EEARALASTR (100 aa)) form a DNA-binding region, fork-head.

In terms of tissue distribution, expressed in testis (at protein level).

The protein resides in the nucleus. Its subcellular location is the cytoplasm. The protein localises to the perinuclear region. Functionally, transcription factor which acts as both an activator and a repressor. Activates transcription of a number of genes including the heat shock chaperones HSPA1A and HSPA6 and the antioxidant NADPH-dependent reductase DHRS2 which are involved in protection against oxidative stress. Required for normal brain development. The polypeptide is Forkhead box protein R1 (FOXR1) (Homo sapiens (Human)).